The following is a 119-amino-acid chain: Transcription and mRNA export factor SUS1 (119 aa).

This sequence belongs to the ENY2 family. As to quaternary structure, component of the nuclear pore complex (NPC)-associated TREX-2 complex (transcription and export complex 2), composed of at least SUS1, SAC3, THP1, SEM1, and CDC31. TREX-2 contains 2 SUS1 chains. The TREX-2 complex interacts with the nucleoporin NUP1. Component of the 1.8 MDa SAGA transcription coactivator-HAT complex. SAGA is built of 5 distinct domains with specialized functions. Within the SAGA complex, SUS1, SGF11, SGF73 and UBP8 form an additional subcomplex of SAGA called the DUB module (deubiquitination module). Interacts directly with THP1, SAC3, SGF11, and with the RNA polymerase II.

Its subcellular location is the nucleus. The protein localises to the nucleoplasm. It is found in the cytoplasm. The protein resides in the P-body. Involved in mRNA export coupled transcription activation by association with both the TREX-2 and the SAGA complexes. At the promoters, SAGA is required for recruitment of the basal transcription machinery. It influences RNA polymerase II transcriptional activity through different activities such as TBP interaction and promoter selectivity, interaction with transcription activators, and chromatin modification through histone acetylation and deubiquitination. Within the SAGA complex, participates in a subcomplex required for deubiquitination of H2B and for the maintenance of steady-state H3 methylation levels. The TREX-2 complex functions in docking export-competent ribonucleoprotein particles (mRNPs) to the nuclear entrance of the nuclear pore complex (nuclear basket). TREX-2 participates in mRNA export and accurate chromatin positioning in the nucleus by tethering genes to the nuclear periphery. May also be involved in cytoplasmic mRNA decay by interaction with components of P-bodies. The polypeptide is Transcription and mRNA export factor SUS1 (Candida albicans (strain SC5314 / ATCC MYA-2876) (Yeast)).